The chain runs to 753 residues: MPILTCRYKILFLYNLRNCFTFQNQRCLIPYGTTTTIRWYNANFQAVQNNFSDYKNELISSHRPEASSLLDFLVKDQKKSGDISLHTKFNLYVDDLLKKSEKGQIKKFINDIKKDLATESQLPLSAPFKDESTRTMTDPQVLAYIHQSMPYQYASLYSVLTDLKIVNSDVSCKSQHILDCGKGPGIGALASYSVFPTPNSVSIVEENPFLKKIIYDIHHNIYPSTSPNPTSPVTLNRLPLGKKDSYTLVIASNKLLEMKSEKELFDYLRSLWSLVSNDGGLLVLCERGTKRGFSLIQRARTFLLQKSKNTSDKQFNAHIVAPCPHDGRCPIDIENGVRANICSFKQHFFLSPFSRLYVPRSHRRSSDRSHYSYVVIQKGITRPLNNTTQRFKNDEDLLENVNVTSPTLKNWPRIIRPPLKRDGHVIIDVCDSDARLRRNIVPKSQGKLAYRLARKSAWGDLFPLEGKVQSTSPSSKITKHLKDASSTYSINPPSYNKPKVERNTTADPIFVGKRFYSTNRHKAFSRFADFNSHRFPCIFTSFSCYNCISGTRNISRQYSRDKFHYNQRTTIYYLVAISIFALGLTYAAVPLYRLFCSKTGYGGTLNTDQSRMNAERMVPRKDNKRIRVTFNGDVAGNLSWKLWPQQREIYVLPGETALGFYTAENTSDHDIVGVATYNIVPGQAAVYFSKVACFCFEEQKLDAHEKVDLPVFFFIDPEFADDPNMKDIDDILLSYTFFEARYDTNGNLLTKLN.

Residues 1–39 (MPILTCRYKILFLYNLRNCFTFQNQRCLIPYGTTTTIRW) constitute a mitochondrion transit peptide. The [4Fe-4S] cluster site is built by Cys323, Cys329, Cys342, and Cys430. The chain crosses the membrane as a helical span at residues 571-591 (IYYLVAISIFALGLTYAAVPL). At 592–753 (YRLFCSKTGY…TNGNLLTKLN (162 aa)) the chain is on the mitochondrial intermembrane side.

The protein in the N-terminal section; belongs to the methyltransferase superfamily. Rsm22 family. In the C-terminal section; belongs to the COX11/CtaG family. Associates with the mitochondrial ribosome (mitoribosome). Only transiently interacts with the mitoribosome. In terms of processing, specific enzymatic cleavages in vivo by mitochondrial processing peptidase (MPP) yield mature proteins including rsm22-2 and cox11-2.

Its subcellular location is the mitochondrion. The protein localises to the mitochondrion inner membrane. Functionally, mitochondrial ribosome (mitoribosome) assembly factor. Binds at the interface of the head and body domains of the mitochondrial small ribosomal subunit (mt-SSU), occluding the mRNA channel and preventing compaction of the head domain towards the body. Probable inactive methyltransferase: retains the characteristic folding and ability to bind S-adenosyl-L-methionine, but it probably lost its methyltransferase activity. Its function is as follows. Exerts its effect at some terminal stage of cytochrome c oxidase synthesis, probably by being involved in the insertion of the copper B into subunit I. The protein is Rsm22-cox11 tandem protein 2, mitochondrial (cox1102) of Schizosaccharomyces pombe (strain 972 / ATCC 24843) (Fission yeast).